The primary structure comprises 169 residues: Ribonuclease H (169 aa).

An RNase H type-1 domain is found at 3-159 (AHAALTLYTD…CDRLATDAAR (157 aa)). Mg(2+)-binding residues include aspartate 12, glutamate 63, aspartate 87, and aspartate 151.

Belongs to the RNase H family. Monomer. The cofactor is Mg(2+).

It is found in the cytoplasm. It carries out the reaction Endonucleolytic cleavage to 5'-phosphomonoester.. In terms of biological role, endonuclease that specifically degrades the RNA of RNA-DNA hybrids. This is Ribonuclease H from Treponema pallidum subsp. pallidum (strain SS14).